Consider the following 66-residue polypeptide: Large ribosomal subunit protein uL29 (66 aa).

The protein belongs to the universal ribosomal protein uL29 family. Part of the 50S ribosomal subunit.

The protein is Large ribosomal subunit protein uL29 (rpmC) of Bacillus subtilis (strain 168).